Consider the following 329-residue polypeptide: Glycerol-3-phosphate dehydrogenase [NAD(P)+] (329 aa).

Residues S13, W14, H34, and K105 each coordinate NADPH. Sn-glycerol 3-phosphate contacts are provided by K105, G134, and S136. NADPH is bound at residue A138. Sn-glycerol 3-phosphate is bound by residues K189, D242, S252, R253, and N254. The active-site Proton acceptor is the K189. Position 253 (R253) interacts with NADPH. NADPH-binding residues include V277 and E279.

Belongs to the NAD-dependent glycerol-3-phosphate dehydrogenase family.

It is found in the cytoplasm. It catalyses the reaction sn-glycerol 3-phosphate + NAD(+) = dihydroxyacetone phosphate + NADH + H(+). The catalysed reaction is sn-glycerol 3-phosphate + NADP(+) = dihydroxyacetone phosphate + NADPH + H(+). Its pathway is membrane lipid metabolism; glycerophospholipid metabolism. Catalyzes the reduction of the glycolytic intermediate dihydroxyacetone phosphate (DHAP) to sn-glycerol 3-phosphate (G3P), the key precursor for phospholipid synthesis. The protein is Glycerol-3-phosphate dehydrogenase [NAD(P)+] of Legionella pneumophila (strain Corby).